We begin with the raw amino-acid sequence, 399 residues long: Acetate kinase (399 aa).

N9 contacts Mg(2+). Residue K16 coordinates ATP. Residue R90 coordinates substrate. Residue D147 is the Proton donor/acceptor of the active site. ATP contacts are provided by residues 207-211, 281-283, and 333-337; these read HLGNG, DFR, and GVGEN. E387 lines the Mg(2+) pocket.

It belongs to the acetokinase family. As to quaternary structure, homodimer. Mg(2+) serves as cofactor. Requires Mn(2+) as cofactor.

Its subcellular location is the cytoplasm. It catalyses the reaction acetate + ATP = acetyl phosphate + ADP. The protein operates within metabolic intermediate biosynthesis; acetyl-CoA biosynthesis; acetyl-CoA from acetate: step 1/2. Functionally, catalyzes the formation of acetyl phosphate from acetate and ATP. Can also catalyze the reverse reaction. The protein is Acetate kinase of Mycobacterium sp. (strain KMS).